The sequence spans 295 residues: NAD kinase (295 aa).

The active-site Proton acceptor is Asp74. Residues 74–75 (DG), 148–149 (ND), His159, Arg176, Asp178, and 189–194 (TAYALS) contribute to the NAD(+) site.

This sequence belongs to the NAD kinase family. A divalent metal cation serves as cofactor.

The protein resides in the cytoplasm. The enzyme catalyses NAD(+) + ATP = ADP + NADP(+) + H(+). In terms of biological role, involved in the regulation of the intracellular balance of NAD and NADP, and is a key enzyme in the biosynthesis of NADP. Catalyzes specifically the phosphorylation on 2'-hydroxyl of the adenosine moiety of NAD to yield NADP. This chain is NAD kinase, found in Legionella pneumophila (strain Corby).